The sequence spans 263 residues: MRLDVISIFPDYLAPLELSLIGKARQDGLLELNVHDLRAFTTDRHRTVDDTPYGGGAGMVMKPEPWALALASVVEPAAKSKPVLIVPSPAGEVFNQRIAEELAAESHLVFACGRYEGIDERVVDWARESFTVRPMSLGDYVLNGGEVAVMAMVEATARLLPGVVGNPDSLLEESHQDGLLEYPVYTKPSAWRGVDIPAVLLSGNHAKIARFRRDEQLRRTAQRRPDLLTQLDPAILDRADLAVLRESGYLTVDGVLTRTSELG.

S-adenosyl-L-methionine is bound by residues glycine 113 and 137 to 142 (LGDYVL).

It belongs to the RNA methyltransferase TrmD family. As to quaternary structure, homodimer.

The protein resides in the cytoplasm. The catalysed reaction is guanosine(37) in tRNA + S-adenosyl-L-methionine = N(1)-methylguanosine(37) in tRNA + S-adenosyl-L-homocysteine + H(+). Specifically methylates guanosine-37 in various tRNAs. The sequence is that of tRNA (guanine-N(1)-)-methyltransferase from Renibacterium salmoninarum (strain ATCC 33209 / DSM 20767 / JCM 11484 / NBRC 15589 / NCIMB 2235).